A 623-amino-acid chain; its full sequence is 1-deoxy-D-xylulose-5-phosphate synthase (623 aa).

Residues His80 and Gly121 to Ser123 each bind thiamine diphosphate. Asp152 is a Mg(2+) binding site. Thiamine diphosphate-binding positions include Gly153 to Ala154, Asn181, Tyr289, and Glu372. Mg(2+) is bound at residue Asn181.

It belongs to the transketolase family. DXPS subfamily. As to quaternary structure, homodimer. Mg(2+) serves as cofactor. The cofactor is thiamine diphosphate.

It catalyses the reaction D-glyceraldehyde 3-phosphate + pyruvate + H(+) = 1-deoxy-D-xylulose 5-phosphate + CO2. The protein operates within metabolic intermediate biosynthesis; 1-deoxy-D-xylulose 5-phosphate biosynthesis; 1-deoxy-D-xylulose 5-phosphate from D-glyceraldehyde 3-phosphate and pyruvate: step 1/1. Catalyzes the acyloin condensation reaction between C atoms 2 and 3 of pyruvate and glyceraldehyde 3-phosphate to yield 1-deoxy-D-xylulose-5-phosphate (DXP). This chain is 1-deoxy-D-xylulose-5-phosphate synthase, found in Baumannia cicadellinicola subsp. Homalodisca coagulata.